Reading from the N-terminus, the 1425-residue chain is MGDWHRAFTQNTLVPPHPQRARQLGKESTAFQCILKWLDGPLIKQGILDMLSELECHLRVTLFDVTYKHFFGRTWKTTVKPTNQPSKQPPRITFNEPLYFHTTLSHPSIVAVVEVVTEGRKRDGTLQLLSCGFGILRIFGNKPESPTSAAQDKRLRLYHGTPRALLHPLLQDPIEQNKFMRLMENCSLQYTLKPHPPLEPAFHLLPENLLVSGFQQIPGLLPPHGDTGDALRKPRFQKPTTWHLDDLFFTLYPSLEKFEEELVQLLISDREGVGLLDSGTLEVLERRLHVCVHNGLGFVQRPQVVVLVPEMDVALTRSASFSRKISASSKNSSGNQALVLRSHLRLPEMVSHPAFAIVFQLEYVFNSPSGADGGASSPTSISSVACMHMVRWAVWNPDLEVGPGKVTLPLQGGVQQNPSRCLVYKVPSASMSSEEVKQVESGTIQFQFSLSSDGPTEHANGPRVGRRSSRKMPASPSGTPAPAARDLAATQDSPVGPGLSLSQLTASPLSPALQSSSKPPLQPPDSSQSPEGPQLQAESVLESRVSHLEADLSQPASLQGTPAVEHLQELPFTPLHAPIVVGAQTRSSRSQLSRAAMVLLQSSGFPEILDASQQPVEAVNPIDPVRFNPQKEESDCLRGNEIVLQFLAFSRAAQDCPGTPWPQTVYFTFQFYRFPPETTPRLQLVKLDGTGKSGSGSLSHILVPINKDGSFDAGSPGLQLRYMVDPGFLKPGEQRWFAHYLAAQTLQVDVWDGDSLLLIGSAGVQMKHLLRQGRPAVQVSHELEVVATEYEQEMMAVSGDVAGFGSVKPIGVHTVVKGRLHLTLANVGHACEPRARGSNLLPPSRSRVISNDGASFFSGGSLLIPGGPKRKRVVQAQRLADVDSELAAMLLTHTRAGQGPQAAGQEADAVHKRKLERMRLVRLQEAGGDSDSRRISLLAQHSVRAQHSRDLQVIDAYRERTKAESIAGVLSQAITTHHTLYATLGTAEFFEFALKNPHNTQHTVAIEIDSPELSIILDSQEWRYFKEATGLHTPLEEDMFHLRGSLAPQLYLRPRETAHIPLKFQSFSVGPLAPTQAPAEVITEKDAESGPLWKCSAMPTKHAKVLFRVETGQLIAVLCLTVEPQPHVVDQVFRFYHPELTFLKKAIRLPPWHTLPGAPVGMPGEDPPVHVRCSDPNVICEAQNVGPGEPRDVFLKVASGPSPEIKDFFVVIYADRWLAVPVQTWQVCLHSLQRVDVSCVAGQLTRLSLVLRGTQTVRKVRAFTSHPQELKTDPAGVFVLPPHGVQDLHVGVRPRRAGSRFVHLNLVDIDYHQLVASWLVCLSCRQPLISKAFEITMAAGDEKGTNKRITYTNPYPSRRTYRLHSDRPELLRFKEDSFQVAGGETYTIGLRFLPSGSAGQEEILIYINDHEDKNEETFCVKVLYQ.

The residue at position 145 (Ser145) is a Phosphoserine. The tract at residues 448–554 (FSLSSDGPTE…VSHLEADLSQ (107 aa)) is disordered. 2 stretches are compositionally biased toward low complexity: residues 473-484 (PASPSGTPAPAA) and 507-530 (SPLSPALQSSSKPPLQPPDSSQSP). Residues 822–1425 (LTLANVGHAC…ETFCVKVLYQ (604 aa)) form a sufficient for basal bodies localization region.

Belongs to the NPHP4 family. In terms of assembly, interacts with NPHP1 and RPGRIP1L/NPHP8; NPHP1, NPHP4 and RPGRIP1L are proposed to form a functional NPHP1-4-8 module localized to cell-cell contacts and the ciliary transition zone; NPHP4 mediates the interaction between NPHP1 and RPGRIP1L. Interacts with IQCB1/NPHP5; the interaction likely requires additional interactors. Interacts with RPGRIP1, CEP164, JADE1, PALS1, INADL, PARD6A, INVS, DVL2. Interacts with INTU; INTU mediates the interaction between NPHP4 and DAAM1. Interacts with JADE1. Interacts with SPATA7. Expressed in the retina (at protein level).

Its subcellular location is the cytoplasm. The protein resides in the cytoskeleton. The protein localises to the cilium basal body. It localises to the microtubule organizing center. It is found in the centrosome. Its subcellular location is the cell junction. The protein resides in the tight junction. Involved in the organization of apical junctions; the function is proposed to implicate a NPHP1-4-8 module. Does not seem to be strictly required for ciliogenesis. Required for building functional cilia. Involved in the organization of the subapical actin network in multiciliated epithelial cells. Seems to recruit INT to basal bodies of motile cilia which subsequently interacts with actin-modifying proteins such as DAAM1. In cooperation with INVS may down-regulate the canonical Wnt pathway and promote the Wnt-PCP pathway by regulating expression and subcellular location of disheveled proteins. Stabilizes protein levels of JADE1 and promotes its translocation to the nucleus leading to cooperative inhibition of canonical Wnt signaling. Acts as negative regulator of the hippo pathway by association with LATS1 and modifying LATS1-dependent phosphorylation and localization of WWTR1/TAZ. This is Nephrocystin-4 (Nphp4) from Mus musculus (Mouse).